The chain runs to 996 residues: Alanine--tRNA ligase, chloroplastic/mitochondrial (996 aa).

The Zn(2+) site is built by H677, H681, C779, and H783.

The protein belongs to the class-II aminoacyl-tRNA synthetase family. Monomer. The cofactor is Zn(2+).

The protein localises to the plastid. Its subcellular location is the chloroplast. It localises to the mitochondrion. The enzyme catalyses tRNA(Ala) + L-alanine + ATP = L-alanyl-tRNA(Ala) + AMP + diphosphate. Functionally, catalyzes the attachment of alanine to tRNA(Ala) in a two-step reaction: alanine is first activated by ATP to form Ala-AMP and then transferred to the acceptor end of tRNA(Ala). Also edits incorrectly charged tRNA(Ala) via its editing domain. The sequence is that of Alanine--tRNA ligase, chloroplastic/mitochondrial from Oryza sativa subsp. japonica (Rice).